Reading from the N-terminus, the 75-residue chain is UPF0352 protein ASA_2693 (75 aa).

Belongs to the UPF0352 family.

The chain is UPF0352 protein ASA_2693 from Aeromonas salmonicida (strain A449).